Reading from the N-terminus, the 156-residue chain is Putative pre-16S rRNA nuclease (156 aa).

The protein belongs to the YqgF nuclease family.

It is found in the cytoplasm. Its function is as follows. Could be a nuclease involved in processing of the 5'-end of pre-16S rRNA. This is Putative pre-16S rRNA nuclease from Bartonella tribocorum (strain CIP 105476 / IBS 506).